Here is a 256-residue protein sequence, read N- to C-terminus: Phosphoribosylaminoimidazole-succinocarboxamide synthase (256 aa).

Residues 234 to 256 (KPQKPAAAKKKAPVSKKTVKRTR) are disordered. Basic residues predominate over residues 240-256 (AAKKKAPVSKKTVKRTR).

Belongs to the SAICAR synthetase family.

It catalyses the reaction 5-amino-1-(5-phospho-D-ribosyl)imidazole-4-carboxylate + L-aspartate + ATP = (2S)-2-[5-amino-1-(5-phospho-beta-D-ribosyl)imidazole-4-carboxamido]succinate + ADP + phosphate + 2 H(+). It participates in purine metabolism; IMP biosynthesis via de novo pathway; 5-amino-1-(5-phospho-D-ribosyl)imidazole-4-carboxamide from 5-amino-1-(5-phospho-D-ribosyl)imidazole-4-carboxylate: step 1/2. The chain is Phosphoribosylaminoimidazole-succinocarboxamide synthase from Methanoregula boonei (strain DSM 21154 / JCM 14090 / 6A8).